The sequence spans 221 residues: uncharacterized protein (221 aa).

2 stretches are compositionally biased toward low complexity: residues 1–27 and 140–162; these read MNNN…NNNN and TTTS…NSSS. Disordered regions lie at residues 1–28 and 140–205; these read MNNN…NNNE and TTTS…NIGG.

This is an uncharacterized protein from Dictyostelium discoideum (Social amoeba).